A 374-amino-acid polypeptide reads, in one-letter code: MSKRDYYEVLGVERGASEADLKKAYRRLAMKYHPDRNPGDKESEDKFKEANEAYEVLSDASKRAAFDQYGHAGVDPSMGGGGAGFGGANFSDIFGDVFSDFFGGGRGGGRGGAQRGSDLRYTLELNLEEAVRGTTVSIRVPTLVNCQPCDGSGAKKGSTPSTCPTCGGIGQVRMQQGFFSVQQTCPRCHGQGKIITDPCTSCHGEGRVEEYKTLSVKVPAGVDTGDRIRLSGEGEAGTHGGPTGDLYVVISVREHEIFQRDGKHLYCEVPISYTDAALGGELEVPTLDGRVKLKIPEGTQTGKQFRLRGKGVAPVRGGGAGDLLCRVAVETPVNLSRRQRELLEELRDSLEGDSSHSPKASGWFDGVKRFFGDL.

One can recognise a J domain in the interval 5–70 (DYYEVLGVER…SKRAAFDQYG (66 aa)). The CR-type zinc finger occupies 133 to 211 (GTTVSIRVPT…CHGEGRVEEY (79 aa)). Zn(2+) contacts are provided by C146, C149, C163, C166, C185, C188, C199, and C202. CXXCXGXG motif repeat units follow at residues 146–153 (CQPCDGSG), 163–170 (CPTCGGIG), 185–192 (CPRCHGQG), and 199–206 (CTSCHGEG).

The protein belongs to the DnaJ family. As to quaternary structure, homodimer. The cofactor is Zn(2+).

It is found in the cytoplasm. Participates actively in the response to hyperosmotic and heat shock by preventing the aggregation of stress-denatured proteins and by disaggregating proteins, also in an autonomous, DnaK-independent fashion. Unfolded proteins bind initially to DnaJ; upon interaction with the DnaJ-bound protein, DnaK hydrolyzes its bound ATP, resulting in the formation of a stable complex. GrpE releases ADP from DnaK; ATP binding to DnaK triggers the release of the substrate protein, thus completing the reaction cycle. Several rounds of ATP-dependent interactions between DnaJ, DnaK and GrpE are required for fully efficient folding. Also involved, together with DnaK and GrpE, in the DNA replication of plasmids through activation of initiation proteins. This Pseudomonas putida (strain GB-1) protein is Chaperone protein DnaJ.